Here is a 433-residue protein sequence, read N- to C-terminus: Hps1-dma1 cluster O-methyltransferase (433 aa).

The disordered stretch occupies residues 36 to 55 (NGHPERSLNSTDSVRLSDAP). Asp-285 is a binding site for S-adenosyl-L-methionine. His-331 (proton acceptor) is an active-site residue.

This sequence belongs to the class I-like SAM-binding methyltransferase superfamily. Cation-independent O-methyltransferase family. COMT subfamily.

Its pathway is secondary metabolite biosynthesis. In terms of biological role, O-methyltransferase; part of the hps1-dma1 gene cluster that probably mediates the biosynthesis a derivative of cyclopiazonic acid (CPA). The hybrid polyketide synthase-nonribosomal peptide synthetase (PKS-NRPS) nps1 might incorporates acetyl-CoA, malonyl-CoA, and tryptophan (Trp) and utilizes a C-terminal redox-incompetent reductase domain to make and release the tryptophan tetramic acid, cyclo-acetoacetyl-L-tryptophan (c-AATrp), as the first intermediate in the pathway. In addition, the cluster also includes the tryptophan dimethylallyltransferase dma1, the FAD-dependent oxidoreductase toxD, the cytochrome P450 monooxygenase cyp3.1 and the methyltransferase DOTSEDRAFT_139328; the latter 2 being not present in all CPA-producing fungi but involved in additional modifications that occur in biosynthesis the of a range of CPA and CPA-like products. Further studies are required to clarify whether the CPA-like hps1-dma1 cluster is functional or a non-functional relic reflecting evolution of D.septosporum. The sequence is that of Hps1-dma1 cluster O-methyltransferase from Dothistroma septosporum (strain NZE10 / CBS 128990) (Red band needle blight fungus).